Here is a 411-residue protein sequence, read N- to C-terminus: Probable tRNA pseudouridine synthase D (411 aa).

D81 functions as the Nucleophile in the catalytic mechanism. One can recognise a TRUD domain in the interval 154-375 (GTPNFFGLQR…SGSYRPADTL (222 aa)).

It belongs to the pseudouridine synthase TruD family.

It catalyses the reaction uridine(13) in tRNA = pseudouridine(13) in tRNA. Its function is as follows. Could be responsible for synthesis of pseudouridine from uracil-13 in transfer RNAs. The polypeptide is Probable tRNA pseudouridine synthase D (Archaeoglobus fulgidus (strain ATCC 49558 / DSM 4304 / JCM 9628 / NBRC 100126 / VC-16)).